The sequence spans 430 residues: Tyrosine--tRNA ligase (430 aa).

Position 32 (Tyr32) interacts with L-tyrosine. Residues Pro37–His46 carry the 'HIGH' region motif. Residues Tyr172 and Gln176 each coordinate L-tyrosine. The 'KMSKS' region signature appears at Lys232 to Thr236. Position 235 (Lys235) interacts with ATP. One can recognise an S4 RNA-binding domain in the interval Val362–Ala429.

The protein belongs to the class-I aminoacyl-tRNA synthetase family. TyrS type 1 subfamily. In terms of assembly, homodimer.

It localises to the cytoplasm. It carries out the reaction tRNA(Tyr) + L-tyrosine + ATP = L-tyrosyl-tRNA(Tyr) + AMP + diphosphate + H(+). In terms of biological role, catalyzes the attachment of tyrosine to tRNA(Tyr) in a two-step reaction: tyrosine is first activated by ATP to form Tyr-AMP and then transferred to the acceptor end of tRNA(Tyr). This is Tyrosine--tRNA ligase from Bacteroides thetaiotaomicron (strain ATCC 29148 / DSM 2079 / JCM 5827 / CCUG 10774 / NCTC 10582 / VPI-5482 / E50).